The following is a 160-amino-acid chain: uncharacterized protein (160 aa).

An N-terminal signal peptide occupies residues Met1–Ala27.

This is an uncharacterized protein from Aquifex aeolicus (strain VF5).